The following is a 134-amino-acid chain: Small ribosomal subunit protein uS8c (134 aa).

It belongs to the universal ribosomal protein uS8 family. In terms of assembly, part of the 30S ribosomal subunit.

It localises to the plastid. The protein resides in the chloroplast. In terms of biological role, one of the primary rRNA binding proteins, it binds directly to 16S rRNA central domain where it helps coordinate assembly of the platform of the 30S subunit. The sequence is that of Small ribosomal subunit protein uS8c (rps8) from Gossypium hirsutum (Upland cotton).